We begin with the raw amino-acid sequence, 21 residues long: Bradykinin-potentiating peptide K12 (21 aa).

Positions 1–21 (LRDYANRVINGGPVEAAGPPA) are disordered.

As to expression, expressed by the venom gland.

The protein resides in the secreted. Its function is as follows. Inhibits angiotensin-converting enzyme (ACE), but does not serve as substrate for the enzyme. Potentiate bradykinin (BK) on the isolated guinea pig ileum as well as the isolated rat uterus for contraction. Also potentiates in vivo the depressor effect of BK on arterial blood pressure in the normotensive anesthetized rat. Intracerebroventricular injection into mice does not show toxic activity. The chain is Bradykinin-potentiating peptide K12 from Buthus occitanus (Common European scorpion).